A 399-amino-acid polypeptide reads, in one-letter code: Transferrin receptor subunit ESAG6 (399 aa).

Residues 1–17 (MRFWFVLLALLGKEIYA) form the signal peptide. N-linked (GlcNAc...) asparagine glycosylation is found at N26 and N110. Cystine bridges form between C34/C161, C84/C312, and C144/C215. N-linked (GlcNAc...) asparagine glycans are attached at residues N235, N250, and N360. N376 is lipidated: GPI-anchor amidated asparagine. Positions 377–399 (AAAIHLSVSTAALCRSALLLGVL) are cleaved as a propeptide — removed in mature form.

Heterodimer composed of ESAG6 and ESAG7. In terms of processing, N-glycosylated. Glycosylation is dispensable for heterodimer formation and host transferrin binding.

It is found in the cell membrane. Its subcellular location is the flagellar pocket. Its function is as follows. Transferrin receptor subunit involved in receptor-mediated acquisition of iron from the environment by binding host TF/transferrin. The polypeptide is Transferrin receptor subunit ESAG6 (Trypanosoma brucei brucei).